The chain runs to 185 residues: ATP-dependent protease subunit HslV (185 aa).

Threonine 12 is an active-site residue. Residues alanine 168, cysteine 171, and threonine 174 each contribute to the Na(+) site.

Belongs to the peptidase T1B family. HslV subfamily. In terms of assembly, a double ring-shaped homohexamer of HslV is capped on each side by a ring-shaped HslU homohexamer. The assembly of the HslU/HslV complex is dependent on binding of ATP.

It localises to the cytoplasm. The enzyme catalyses ATP-dependent cleavage of peptide bonds with broad specificity.. Allosterically activated by HslU binding. Its function is as follows. Protease subunit of a proteasome-like degradation complex believed to be a general protein degrading machinery. The polypeptide is ATP-dependent protease subunit HslV (Ruegeria pomeroyi (strain ATCC 700808 / DSM 15171 / DSS-3) (Silicibacter pomeroyi)).